The sequence spans 123 residues: Large ribosomal subunit protein bL17 (123 aa).

Belongs to the bacterial ribosomal protein bL17 family. Part of the 50S ribosomal subunit. Contacts protein L32.

This Borrelia garinii subsp. bavariensis (strain ATCC BAA-2496 / DSM 23469 / PBi) (Borreliella bavariensis) protein is Large ribosomal subunit protein bL17.